The sequence spans 230 residues: Claudin-2 (230 aa).

Topologically, residues Met1–Gln7 are cytoplasmic. Residues Leu8–Pro28 traverse the membrane as a helical segment. The Extracellular portion of the chain corresponds to Ser29 to Gln81. Cys54 and Cys64 are oxidised to a cystine. Residues Ala82–Met102 form a helical membrane-spanning segment. The Cytoplasmic portion of the chain corresponds to Arg103–Arg116. Residues Val117–Ala137 form a helical membrane-spanning segment. The Extracellular portion of the chain corresponds to Trp138 to Glu162. A helical transmembrane segment spans residues Ala163–Phe183. The Cytoplasmic segment spans residues Ser184–Val230. Residues Thr205–Val230 are disordered. A Glycyl lysine isopeptide (Lys-Gly) (interchain with G-Cter in SUMO) cross-link involves residue Lys218. Phosphoserine occurs at positions 219 and 223. Over residues Glu220–Val230 the composition is skewed to polar residues. The interval Tyr229 to Val230 is interaction with TJP1, TJP2 and TJP3.

It belongs to the claudin family. As to quaternary structure, can form homo- and heteropolymers with other claudins to mediate paracellular barrier and channel functions of tight junctions in response to physiological stimuli. Homopolymers interact with CLDN3, but not CLDN1, homopolymers. Directly interacts with TJP1/ZO-1, TJP2/ZO-2 and TJP3/ZO-3. Post-translationally, the disulfide bond is necessary for pore formation, but is not required for correct protein trafficking.

It localises to the cell junction. It is found in the tight junction. The protein resides in the cell membrane. It catalyses the reaction Na(+)(in) = Na(+)(out). It carries out the reaction K(+)(in) = K(+)(out). The enzyme catalyses Rb(+)(in) = Rb(+)(out). The catalysed reaction is Li(+)(in) = Li(+)(out). It catalyses the reaction Cs(+)(in) = Cs(+)(out). It carries out the reaction Ca(2+)(in) = Ca(2+)(out). The enzyme catalyses methylamine(out) = methylamine(in). The catalysed reaction is choline(out) = choline(in). It catalyses the reaction H2O(in) = H2O(out). In terms of biological role, forms paracellular channels: polymerizes in tight junction strands with cation- and water-selective channels through the strands, conveying epithelial permeability in a process known as paracellular tight junction permeability. In intestinal epithelium, allows for sodium and water fluxes from the peritoneal side to the lumen of the intestine to regulate nutrient absorption and clear enteric pathogens as part of mucosal immune response. In kidney, allows passive sodium and calcium reabsorption across proximal tubules from the lumen back to the bloodstream. In the hepatobiliary tract, allows paracellular water and cation fluxes in the hepatic perivenous areas and biliary epithelium to generate bile flow and maintain osmotic gradients. The polypeptide is Claudin-2 (CLDN2) (Bos taurus (Bovine)).